The primary structure comprises 275 residues: 5'-nucleotidase SurE (275 aa).

The a divalent metal cation site is built by Asp14, Asp15, Ser46, and Asn104.

Belongs to the SurE nucleotidase family. Requires a divalent metal cation as cofactor.

The protein localises to the cytoplasm. It carries out the reaction a ribonucleoside 5'-phosphate + H2O = a ribonucleoside + phosphate. Functionally, nucleotidase that shows phosphatase activity on nucleoside 5'-monophosphates. The chain is 5'-nucleotidase SurE from Synechocystis sp. (strain ATCC 27184 / PCC 6803 / Kazusa).